Consider the following 531-residue polypeptide: MAATLDLKSKEEKDAELDKRIEALRRKNEALIRRYQEIEEDRKKAELEGVAVTAPRKGRSVEKENVAVESEKNLGPSRRSPGTPRPPGASKGGRTPPQQGGRAGMGRASRSWEGSPGEQPRGGGAGGRGRRGRGRGSPHLSGAGDTSISDRKSKEWEERRRQNIEKMNEEMEKIAEYERNQREGVLEPNPVRNFLDDPRRRSGPLEESERDRREESRRHGRNWGGPDFERVRCGLEHERQGRRAGLGSAGDMTLSMTGRERSEYLRWKQEREKIDQERLQRHRKPTGQWRREWDAEKTDGMFKDGPVPAHEPSHRYDDQAWARPPKPPTFGEFLSQHKAEASSRRRRKSSRPQAKAAPRAYSDHDDRWETKEGAASPAPETPQPTSPETSPKETPMQPPEIPAPAHRPPEDEGEENEGEEDEEWEDISEDEEEEEIEVEEGDEEEPAQDHQAPEAAPTGIPCSEQAHGVPFSPEEPLLEPQAPGTPSSPFSPPSGHQPVSDWGEEVELNSPRTTHLAGALSPGEAWPFESV.

Residues 40–531 (EDRKKAELEG…PGEAWPFESV (492 aa)) are disordered. Residues 59–72 (RSVEKENVAVESEK) show a composition bias toward basic and acidic residues. Residue Ser80 is modified to Phosphoserine. Thr95 bears the Phosphothreonine mark. Arg107 carries the post-translational modification Omega-N-methylarginine. Ser111 is subject to Phosphoserine. 3 positions are modified to omega-N-methylarginine: Arg121, Arg128, and Arg130. Residues Arg131, Arg133, and Arg135 each carry the asymmetric dimethylarginine modification. Ser137 carries the phosphoserine modification. 3 stretches are compositionally biased toward basic and acidic residues: residues 148 to 185 (ISDR…REGV), 194 to 217 (FLDD…EESR), and 227 to 241 (DFER…ERQG). Residues 149–185 (SDRKSKEWEERRRQNIEKMNEEMEKIAEYERNQREGV) are a coiled coil. The residue at position 202 (Ser202) is a Phosphoserine. Phosphoserine occurs at positions 248 and 255. 4 stretches are compositionally biased toward basic and acidic residues: residues 258–279 (GRER…QERL), 289–302 (WRRE…DGMF), 311–320 (EPSHRYDDQA), and 361–372 (YSDHDDRWETKE). A phosphoserine mark is found at Ser376, Ser386, and Ser390. Residues 386–395 (SPETSPKETP) show a composition bias toward low complexity. Positions 396-406 (MQPPEIPAPAH) are enriched in pro residues. Positions 411–446 (DEGEENEGEEDEEWEDISEDEEEEEIEVEEGDEEEP) are enriched in acidic residues. Ser521 carries the phosphoserine modification.

Probable component of the exon junction complex (EJC); the association is RNA-dependent.

Its function is as follows. Probable component of the exon junction complex (EJC), a multiprotein complex that associates immediately upstream of the exon-exon junction on mRNAs and serves as a positional landmark for the intron exon structure of genes and directs post-transcriptional processes in the cytoplasm such as mRNA export, nonsense-mediated mRNA decay (NMD) or translation. The sequence is that of Coiled-coil domain-containing protein 9 from Homo sapiens (Human).